Reading from the N-terminus, the 390-residue chain is 1-deoxy-D-xylulose 5-phosphate reductoisomerase (390 aa).

NADPH is bound by residues Thr10, Gly11, Ser12, Val13, Gly38, Asn40, and Asn123. Lys124 is a 1-deoxy-D-xylulose 5-phosphate binding site. NADPH is bound at residue Glu125. Asp149 contributes to the Mn(2+) binding site. Residues Ser150, Glu151, Ser175, and His198 each coordinate 1-deoxy-D-xylulose 5-phosphate. Residue Glu151 participates in Mn(2+) binding. Gly204 is a binding site for NADPH. 1-deoxy-D-xylulose 5-phosphate is bound by residues Ser211, Asn216, Lys217, and Glu220. Glu220 serves as a coordination point for Mn(2+).

It belongs to the DXR family. The cofactor is Mg(2+). It depends on Mn(2+) as a cofactor.

It carries out the reaction 2-C-methyl-D-erythritol 4-phosphate + NADP(+) = 1-deoxy-D-xylulose 5-phosphate + NADPH + H(+). It participates in isoprenoid biosynthesis; isopentenyl diphosphate biosynthesis via DXP pathway; isopentenyl diphosphate from 1-deoxy-D-xylulose 5-phosphate: step 1/6. Functionally, catalyzes the NADPH-dependent rearrangement and reduction of 1-deoxy-D-xylulose-5-phosphate (DXP) to 2-C-methyl-D-erythritol 4-phosphate (MEP). This chain is 1-deoxy-D-xylulose 5-phosphate reductoisomerase, found in Paracoccus denitrificans (strain Pd 1222).